A 1065-amino-acid polypeptide reads, in one-letter code: NLR family CARD domain-containing protein 3 (1065 aa).

A compositionally biased stretch (basic and acidic residues) spans 1-10 (MRKQEVRTGR). A disordered region spans residues 1–62 (MRKQEVRTGR…PLGPCSNDSR (62 aa)). The 322-residue stretch at 139-460 (RVSITIGVAG…YCFTHLSLQE (322 aa)) folds into the NACHT domain. An ATP-binding site is contributed by 145-152 (GVAGMGKT). Residues 457 to 460 (SLQE) carry the TRAF6-binding motif. 16 LRR repeats span residues 617–639 (EANL…LLYC), 641–663 (KLRL…VLSG), 665–688 (DCRI…ALAR), 693–716 (NRSL…ALAD), 721–744 (NRTL…SMAE), 749–772 (NRTL…RMAD), 777–800 (NRSL…ALAE), 805–828 (NQGL…ALMG), 833–856 (NQTL…AIAH), 861–884 (NSTL…AIAV), 889–912 (NRTL…ALGQ), 917–940 (NRSL…AVAR), 945–968 (NTAL…VLGE), 973–996 (NRTL…ALAN), 1001–1029 (NSSL…LSGN), and 1031–1052 (RLQH…MISE).

It belongs to the NLRP family. Directly interacts (via CARD) with TMEM173/STING; this interaction reduces TMEM173 trafficking to the perinuclear region in response to interferon stimulatory DNA. Also interacts, but to a lesser extent, with TBK1. Interacts with TRAF6; this interaction results in decreased TRAF6 'Lys-63'-linked polyubiquitination, but leaves 'Lys-48'-linked chains unchanged, promoting TRAF6 protein degradation. Interacts with PIK3R1/PIK3R2; this interaction disrupts the association between PIK3R1/PIK3R2 and the p110 catalytic subunit PIK3CA/PIK3CB/PIK3CD and reduces PIK3R1/PIK3R2 activation. Weakly interacts with PYCARD/ASC. Interacts with CASP1 and CASP5.

The protein resides in the cytoplasm. Its function is as follows. Negative regulator of the innate immune response. Attenuates signaling pathways activated by Toll-like receptors (TLRs) and the DNA sensor STING/TMEM173 in response to pathogen-associated molecular patterns, such as intracellular poly(dA:dT), but not poly(I:C), or in response to DNA virus infection, including that of Herpes simplex virus 1 (HSV1). May affect TLR4 signaling by acting at the level of TRAF6 ubiquitination, decreasing the activating 'Lys-63'-linked ubiquitination and leaving unchanged the degradative 'Lys-48'-linked ubiquitination. Inhibits the PI3K-AKT-mTOR pathway possibly by directly interacting with the posphatidylinositol 3-kinase regulatory subunit p85 (PIK3R1/PIK3R2) and disrupting the association between PIK3R1/PIK3R2 and the catalytic subunit p110 (PIK3CA/PIK3CB/PIK3CD) and reducing PIK3R1/PIK3R2 activation. Via its regulation of the PI3K-AKT-mTOR pathway, controls cell proliferation, predominantly in intestinal epithelial cells. May also affect NOD1- or NOD2-mediated NF-kappa-B activation. Might also affect the inflammatory response by preventing NLRP3 inflammasome formation, CASP1 cleavage and IL1B maturation. The sequence is that of NLR family CARD domain-containing protein 3 (NLRC3) from Homo sapiens (Human).